Reading from the N-terminus, the 209-residue chain is Endoplasmic reticulum vesicle protein 25 (209 aa).

The N-terminal stretch at 1–18 is a signal peptide; that stretch reads MKYTTFGIISLFLSVTWA. The Lumenal portion of the chain corresponds to 19-178; it reads LRFELAASFE…TNESTNRRVR (160 aa). Residues 31–119 enclose the GOLD domain; the sequence is PFCIRDFVEA…MRNVEVNIES (89 aa). A helical transmembrane segment spans residues 179–199; that stretch reads NFSMAVIVVFAALCAWQLNYL. Residues 200-209 are Cytoplasmic-facing; it reads KNYFRAKHII.

Belongs to the EMP24/GP25L family.

It is found in the endoplasmic reticulum membrane. It localises to the golgi apparatus membrane. Constituent of COPII-coated endoplasmic reticulum-derived transport vesicles. Required for efficient transport of a subset of secretory proteins to the Golgi. Facilitates retrograde transport from the Golgi to the endoplasmic reticulum. The chain is Endoplasmic reticulum vesicle protein 25 (ERV25) from Eremothecium gossypii (strain ATCC 10895 / CBS 109.51 / FGSC 9923 / NRRL Y-1056) (Yeast).